The following is an 84-amino-acid chain: Short neurotoxin SNTX-1 (84 aa).

The N-terminal stretch at 1-21 (MKTLLLILVVVTIVCLDLVCC) is a signal peptide. 4 disulfide bridges follow: Cys25-Cys46, Cys39-Cys63, Cys65-Cys76, and Cys77-Cys82.

This sequence belongs to the three-finger toxin family. Short-chain subfamily. Type I alpha-neurotoxin sub-subfamily. As to expression, expressed by the venom gland.

Its subcellular location is the secreted. Functionally, binds to muscle nicotinic acetylcholine receptor (nAChR) and inhibit acetylcholine from binding to the receptor, thereby impairing neuromuscular transmission. This chain is Short neurotoxin SNTX-1, found in Demansia vestigiata (Lesser black whip snake).